A 294-amino-acid polypeptide reads, in one-letter code: PAK4-inhibitor INKA2 (294 aa).

3 disordered regions span residues 50-143, 170-198, and 223-290; these read ISGG…STLM, PELE…RELG, and LKEK…DINT. Residues 85–99 show a composition bias toward polar residues; that stretch reads SPSNQASLGSTSSGK. Residues 134–177 form an inka box region; sequence EPDDWTSTLMSRGRNRQPLVLGDNVFADLVGNWLDLPELEKGGE. Basic and acidic residues predominate over residues 171–198; it reads ELEKGGEKGETGEAGEPKGGRGQPRELG. Over residues 241 to 253 the composition is skewed to basic residues; that stretch reads RSQKVKKRSHSKG.

The protein belongs to the INKA family. In terms of assembly, interacts with PAK4.

The protein localises to the nucleus. Its function is as follows. Inhibitor of the serine/threonine-protein kinase PAK4. Acts by binding PAK4 in a substrate-like manner, inhibiting the protein kinase activity. This chain is PAK4-inhibitor INKA2, found in Bos taurus (Bovine).